Consider the following 487-residue polypeptide: Serine/threonine-protein kinase 4 (487 aa).

Met-1 carries the N-acetylmethionine modification. Thr-3 carries the phosphothreonine modification. A Protein kinase domain is found at 30–281 (FDVLEKLGEG…ATQLLQHPFV (252 aa)). ATP-binding positions include 36–44 (LGEGSYGSV) and Lys-59. Asp-149 acts as the Proton acceptor in catalysis. Thr-183 carries the phosphothreonine; by autocatalysis modification. The residue at position 265 (Ser-265) is a Phosphoserine. The stretch at 290–310 (LRDLINEAMDVKLKRQESQQR) forms a coiled coil. Residues 303–312 (KRQESQQREV) are compositionally biased toward basic and acidic residues. The interval 303–332 (KRQESQQREVDQDDEENSEEDEMDSGTMVR) is disordered. Acidic residues predominate over residues 313–326 (DQDDEENSEEDEMD). Ser-320 carries the phosphoserine modification. Phosphothreonine is present on residues Thr-340 and Thr-367. Thr-387 is modified (phosphothreonine; by PKB/AKT1). Residues Ser-410 and Ser-414 each carry the phosphoserine modification. A Phosphotyrosine modification is found at Tyr-433. Residues 433–480 (YEFLKSWTVEDLQKRLLALDPMMEQEIEEIRQKYQSKRQPILDAIEAK) form the SARAH domain.

Belongs to the protein kinase superfamily. STE Ser/Thr protein kinase family. STE20 subfamily. Homodimer; mediated via the coiled-coil region. Interacts with NORE1, which inhibits autoactivation. Interacts with and stabilizes SAV1. Interacts with RASSF1. Interacts with FOXO3. Interacts with RASSF2 (via SARAH domain). Interacts with AR, PKB/AKT1, TNNI3 and SIRT1. Interacts with DLG5 (via PDZ domain 3). Interacts with MARK3 and SCRIB in the presence of DLG5. Requires Mg(2+) as cofactor. In terms of processing, autophosphorylated on serine and threonine residues. Phosphorylation at Thr-387 by PKB/AKT1, leads to inhibition of its: kinase activity, nuclear translocation and autophosphorylation at Thr-183. It also diminishes its cleavage by caspases and its ability to phosphorylate FOXO3. Post-translationally, proteolytically cleaved by caspase-3 during apoptosis at Asp-326 and Asp-349 resulting in a 37 kDa or a 39 kDa subunit respectively. The 39 kDa subunit is further cleaved into the 37 kDa form. Proteolytic cleavage results in kinase activation and nuclear translocation of the truncated form (MST1/N). It is less likely that cleavage at Asp-349 is a prerequisite for activation as this site is not conserved in the murine ortholog.

Its subcellular location is the cytoplasm. It localises to the nucleus. The catalysed reaction is L-seryl-[protein] + ATP = O-phospho-L-seryl-[protein] + ADP + H(+). It carries out the reaction L-threonyl-[protein] + ATP = O-phospho-L-threonyl-[protein] + ADP + H(+). With respect to regulation, inhibited by the C-terminal non-catalytic region. Activated by caspase-cleavage. Full activation also requires homodimerization and autophosphorylation of Thr-183. Activated by RASSF1 which acts by preventing its dephosphorylation. Functionally, stress-activated, pro-apoptotic kinase which, following caspase-cleavage, enters the nucleus and induces chromatin condensation followed by internucleosomal DNA fragmentation. Key component of the Hippo signaling pathway which plays a pivotal role in organ size control and tumor suppression by restricting proliferation and promoting apoptosis. The core of this pathway is composed of a kinase cascade wherein STK3/MST2 and STK4/MST1, in complex with its regulatory protein SAV1, phosphorylates and activates LATS1/2 in complex with its regulatory protein MOB1, which in turn phosphorylates and inactivates YAP1 oncoprotein and WWTR1/TAZ. Phosphorylation of YAP1 by LATS2 inhibits its translocation into the nucleus to regulate cellular genes important for cell proliferation, cell death, and cell migration. STK3/MST2 and STK4/MST1 are required to repress proliferation of mature hepatocytes, to prevent activation of facultative adult liver stem cells (oval cells), and to inhibit tumor formation. Phosphorylates 'Ser-14' of histone H2B (H2BS14ph) during apoptosis. Phosphorylates FOXO3 upon oxidative stress, which results in its nuclear translocation and cell death initiation. Phosphorylates MOBKL1A, MOBKL1B and RASSF2. Phosphorylates TNNI3 (cardiac Tn-I) and alters its binding affinity to TNNC1 (cardiac Tn-C) and TNNT2 (cardiac Tn-T). Phosphorylates FOXO1 on 'Ser-212' and regulates its activation and stimulates transcription of PMAIP1 in a FOXO1-dependent manner. Phosphorylates SIRT1 and inhibits SIRT1-mediated p53/TP53 deacetylation, thereby promoting p53/TP53 dependent transcription and apoptosis upon DNA damage. Acts as an inhibitor of PKB/AKT1. Phosphorylates AR on 'Ser-650' and suppresses its activity by intersecting with PKB/AKT1 signaling and antagonizing formation of AR-chromatin complexes. The sequence is that of Serine/threonine-protein kinase 4 (STK4) from Aotus nancymaae (Ma's night monkey).